The sequence spans 273 residues: Tyrosinase (273 aa).

Cu cation is bound by residues His-38, His-54, His-63, His-190, His-194, and His-216.

It belongs to the tyrosinase family. The cofactor is Cu(2+).

The catalysed reaction is 2 L-dopa + O2 = 2 L-dopaquinone + 2 H2O. It catalyses the reaction L-tyrosine + O2 = L-dopaquinone + H2O. In terms of biological role, this is a copper-containing oxidase that functions in the formation of pigments such as melanins and other polyphenolic compounds. The protein is Tyrosinase (melC2) of Streptomyces antibioticus.